Here is a 127-residue protein sequence, read N- to C-terminus: Large ribosomal subunit protein bL12 (127 aa).

The protein belongs to the bacterial ribosomal protein bL12 family. In terms of assembly, homodimer. Part of the ribosomal stalk of the 50S ribosomal subunit. Forms a multimeric L10(L12)X complex, where L10 forms an elongated spine to which 2 to 4 L12 dimers bind in a sequential fashion. Binds GTP-bound translation factors.

Functionally, forms part of the ribosomal stalk which helps the ribosome interact with GTP-bound translation factors. Is thus essential for accurate translation. This Streptomyces virginiae (Streptomyces cinnamonensis) protein is Large ribosomal subunit protein bL12.